We begin with the raw amino-acid sequence, 212 residues long: Uracil phosphoribosyltransferase (212 aa).

Residues Arg78, Arg103, and Asp130–Ser138 contribute to the 5-phospho-alpha-D-ribose 1-diphosphate site. Uracil is bound by residues Ile193 and Gly198 to Ala200. Asp199 is a 5-phospho-alpha-D-ribose 1-diphosphate binding site.

This sequence belongs to the UPRTase family. Requires Mg(2+) as cofactor.

It carries out the reaction UMP + diphosphate = 5-phospho-alpha-D-ribose 1-diphosphate + uracil. Its pathway is pyrimidine metabolism; UMP biosynthesis via salvage pathway; UMP from uracil: step 1/1. With respect to regulation, allosterically activated by GTP. Functionally, catalyzes the conversion of uracil and 5-phospho-alpha-D-ribose 1-diphosphate (PRPP) to UMP and diphosphate. This is Uracil phosphoribosyltransferase from Pseudomonas putida (strain ATCC 700007 / DSM 6899 / JCM 31910 / BCRC 17059 / LMG 24140 / F1).